Reading from the N-terminus, the 572-residue chain is DNA polymerase (572 aa).

The interval 1-222 (MSRKMFSCDF…LPMDKEIRKA (222 aa)) is 3'-5' exonuclease and strand displacement activities. The segment at 56 to 66 (YFHNLKFDGAF) is interaction with the primer terminal protein. Mg(2+) is bound by residues aspartate 142 and aspartate 166. The DNA-binding; Involved in the formation of a stable complex between TP and phi29 DNA polymerase stretch occupies residues 223-226 (YRGG). Residues 227–572 (FTWLNDKYKE…VLVDSVFTIK (346 aa)) form an initiation, polymerization and pyrophosphorolytic activities region. Residues aspartate 246 and valine 247 each coordinate Mg(2+). 5-methyl-UTP contacts are provided by tyrosine 251, lysine 368, and lysine 380. The Mg(2+) site is built by aspartate 453 and aspartate 455. Aspartate 455 contacts 5-methyl-UTP.

Belongs to the DNA polymerase type-B family. Interacts with the primer terminal protein; this interaction allows the initiation of TP-primed DNA replication at both viral DNA ends. Interacts with DNA. Mg(2+) serves as cofactor.

The catalysed reaction is DNA(n) + a 2'-deoxyribonucleoside 5'-triphosphate = DNA(n+1) + diphosphate. Polymerase responsible for protein-primed viral DNA replication by strand displacement with high processivity and fidelity. To start replication, the DNA polymerase forms a heterodimer with a free primer terminal protein (TP), recognizes the replication origins at both 5' ends of the linear chromosome, and initiates replication using as primer the OH-group of Ser-232 of the TP. This polymerase possesses three enzymatic activities: DNA synthesis (polymerase), primer terminal protein (TP) deoxynucleotidylation, which is the formation of a covalent linkage (phosphoester) between the hydroxyl group of a specific serine residue in TP and 5'-dAMP, a reaction directed by the second T at the 3' end, and 3' to 5' exonuclease activity. Exonuclease activity has a proofreading purpose. This chain is DNA polymerase (G), found in Bacillus phage M2 (Bacteriophage M2).